A 513-amino-acid polypeptide reads, in one-letter code: ATP synthase subunit alpha (513 aa).

ATP is bound at residue 169 to 176 (GDRQTGKT).

It belongs to the ATPase alpha/beta chains family. F-type ATPases have 2 components, CF(1) - the catalytic core - and CF(0) - the membrane proton channel. CF(1) has five subunits: alpha(3), beta(3), gamma(1), delta(1), epsilon(1). CF(0) has three main subunits: a(1), b(2) and c(9-12). The alpha and beta chains form an alternating ring which encloses part of the gamma chain. CF(1) is attached to CF(0) by a central stalk formed by the gamma and epsilon chains, while a peripheral stalk is formed by the delta and b chains.

It is found in the cell inner membrane. It catalyses the reaction ATP + H2O + 4 H(+)(in) = ADP + phosphate + 5 H(+)(out). In terms of biological role, produces ATP from ADP in the presence of a proton gradient across the membrane. The alpha chain is a regulatory subunit. The chain is ATP synthase subunit alpha from Haemophilus influenzae (strain ATCC 51907 / DSM 11121 / KW20 / Rd).